We begin with the raw amino-acid sequence, 1066 residues long: Cytoplasmic dynein 2 intermediate chain 1 (1066 aa).

Disordered stretches follow at residues 22–366 (LWAI…ENAR) and 381–408 (YEDD…LEEL). Residue S30 is modified to Phosphoserine. Composition is skewed to basic and acidic residues over residues 30–135 (SKEE…EELR), 147–171 (ETRD…RSEE), 180–256 (DEDR…EERH), 264–308 (GFHF…KRDG), and 316–336 (NLVR…HEEG). S247 is subject to Phosphoserine. Acidic residues-rich tracts occupy residues 351–362 (ETVEIEKEETDL) and 381–397 (YEDD…ESSN). Residues 399 to 408 (PESREKLEEL) are compositionally biased toward basic and acidic residues. The binding to the DYNLT2B-DYNLT1/DYNLT3 dimer stretch occupies residues 473–552 (ASHRQKSRTQ…DIQTEEIETR (80 aa)). WD repeat units follow at residues 694–734 (ICES…RLHY), 775–821 (VHKK…KADI), 907–947 (IRPV…PLLQ), and 952–992 (TDSH…LGPV).

It belongs to the dynein light intermediate chain family. Intermediate chain of the cytoplasmic dynein complex 2, a multisubunit complex, composed at least of eleven different proteins. The cytoplasmic dynein 2 complex consists of two catalytic heavy chains (HCs) and a number of non-catalytic subunits presented by intermediate chains (ICs), light intermediate chains (LICs) and light chains (LCs). Among them, a heavy chain (DYNC2H1), two intermediate chains (DYNC2I2 and DYNC2I1), a light intermediate chain (DYNC2LI1), and a light chain (DYNLT2B) are unique to the cytoplasmic dynein complex 2, but a subset of the light chains are also shared by dynein-1 and dynein-2 complexes. Interacts with DYNC2I2; their C-terminal domains each bind a copy of the heavy chain, and their extended N-terminal regions are held together by an array of light chain dimers. Interacts with DYNLT2B. Interacts (via the N-terminal half) with DYNLT2B-DYNLT1 dimer or with DYNLT2B-DYNLT3 dimer; this interaction is crucial for retrograde trafficking of ciliary proteins. As to expression, expressed in chondrocytes (at protein level).

It is found in the cell projection. The protein localises to the cilium. Its subcellular location is the cytoplasm. The protein resides in the cytoskeleton. It localises to the microtubule organizing center. It is found in the centrosome. Acts as one of several non-catalytic accessory components of the cytoplasmic dynein 2 complex (dynein-2 complex), a motor protein complex that drives the movement of cargos along microtubules within cilia and flagella in concert with the intraflagellar transport (IFT) system. DYNC2I1 plays a major role in retrograde ciliary protein trafficking in cilia and flagella. Also requires to maintain a functional transition zone. The sequence is that of Cytoplasmic dynein 2 intermediate chain 1 from Homo sapiens (Human).